A 1445-amino-acid polypeptide reads, in one-letter code: DNA-directed RNA polymerase subunit beta'' (1445 aa).

Residues Cys220, Cys293, Cys300, and Cys303 each coordinate Zn(2+).

This sequence belongs to the RNA polymerase beta' chain family. RpoC2 subfamily. In plastids the minimal PEP RNA polymerase catalytic core is composed of four subunits: alpha, beta, beta', and beta''. When a (nuclear-encoded) sigma factor is associated with the core the holoenzyme is formed, which can initiate transcription. Requires Zn(2+) as cofactor.

It is found in the plastid. The protein resides in the chloroplast. It catalyses the reaction RNA(n) + a ribonucleoside 5'-triphosphate = RNA(n+1) + diphosphate. DNA-dependent RNA polymerase catalyzes the transcription of DNA into RNA using the four ribonucleoside triphosphates as substrates. The polypeptide is DNA-directed RNA polymerase subunit beta'' (Anthoceros angustus (Hornwort)).